The following is a 429-amino-acid chain: 3-phosphoshikimate 1-carboxyvinyltransferase (429 aa).

The 3-phosphoshikimate site is built by Lys23, Ser24, and Arg28. Lys23 lines the phosphoenolpyruvate pocket. Positions 95 and 123 each coordinate phosphoenolpyruvate. Residues Ser168, Gln170, Asp316, and Lys343 each coordinate 3-phosphoshikimate. Gln170 lines the phosphoenolpyruvate pocket. Residue Asp316 is the Proton acceptor of the active site. 2 residues coordinate phosphoenolpyruvate: Arg347 and Arg389.

It belongs to the EPSP synthase family. Monomer.

The protein resides in the cytoplasm. The enzyme catalyses 3-phosphoshikimate + phosphoenolpyruvate = 5-O-(1-carboxyvinyl)-3-phosphoshikimate + phosphate. It functions in the pathway metabolic intermediate biosynthesis; chorismate biosynthesis; chorismate from D-erythrose 4-phosphate and phosphoenolpyruvate: step 6/7. Catalyzes the transfer of the enolpyruvyl moiety of phosphoenolpyruvate (PEP) to the 5-hydroxyl of shikimate-3-phosphate (S3P) to produce enolpyruvyl shikimate-3-phosphate and inorganic phosphate. The polypeptide is 3-phosphoshikimate 1-carboxyvinyltransferase (Bacillus thuringiensis subsp. konkukian (strain 97-27)).